We begin with the raw amino-acid sequence, 467 residues long: Glutamate--tRNA ligase (467 aa).

A 'HIGH' region motif is present at residues 9–19; the sequence is PSPTGYLHIGG. The 'KMSKS' region motif lies at 237-241; the sequence is KLSKR. K240 contributes to the ATP binding site.

It belongs to the class-I aminoacyl-tRNA synthetase family. Glutamate--tRNA ligase type 1 subfamily. Monomer.

It is found in the cytoplasm. The catalysed reaction is tRNA(Glu) + L-glutamate + ATP = L-glutamyl-tRNA(Glu) + AMP + diphosphate. Functionally, catalyzes the attachment of glutamate to tRNA(Glu) in a two-step reaction: glutamate is first activated by ATP to form Glu-AMP and then transferred to the acceptor end of tRNA(Glu). The protein is Glutamate--tRNA ligase of Xanthomonas campestris pv. campestris (strain 8004).